The primary structure comprises 495 residues: MGSHAPAVAGKPDPKKGPYQATPWNIQLSATDTPGFTHVGNLERRSADRASDLVMNNHSKFHTFHDEIVGFHNHISHHVLTLWALGATPDEMQAAYDFNKPFQLLTYYNDPSVNIKLRDPEFFRQGLGNFELYGDYVRFFQAEVAAKGTQTVLHDYLFKGDTLTEDLLARLFSGFLHPLINLGFALEFQQPFLAAECLASTCMHPPYPAEFLTATEQHVECNGRPRSLPILSIAEGMRLDPVVATAVGPEDGNNRIADALLKRALKELIPHLSYFQVEPTEHDLARKTAEILQASAYICGAAQHPRKVEALDFVMLHSLTAAVFFPTIIKQEWISIETRARLLEWKGRSDLITYAALGCPKLYPDRITGYQPKQAATGWSDVVQRARVYQDDGHACKVIRALMCAENVCQPFEGEEGFPLKKADFLTVAHMTMDSVERMSDPNWVRQTEKVKQMSAQGRGQHSQVSAIMLRWVRWCGTEGAWDDFPDLEELSPSA.

Residues 1–22 are disordered; the sequence is MGSHAPAVAGKPDPKKGPYQAT.

Belongs to the questin oxidase family.

It functions in the pathway mycotoxin biosynthesis; aflatoxin biosynthesis. Oxidoreductase; part of the gene cluster that mediates the biosynthesis of aflatoxins, a group of polyketide-derived furanocoumarins, and part of the most toxic and carcinogenic compounds among the known mycotoxins. The four major aflatoxins produced by A.parasiticus are aflatoxin B1 (AFB1), aflatoxin B2 (AFB2), aflatoxin G1 (AFG1) and aflatoxin G2 (AFG2). Within the aflatoxin pathway, the oxidoreductase aflY seems to be involved in the conversion of versicolorin A (VERA) to demethylsterigmatocystin (DMST), through probable Baeyer-Villiger oxidation required for the formation of the xanthone ring. The biosynthesis of aflatoxins begins with the norsolorinic acid synthase aflC that combines a hexanoyl starter unit produced by the fatty acid synthase aflA/aflB and 7 malonyl-CoA extender units to synthesize the precursor NOR. The second step is the conversion of NOR to averantin and requires the norsolorinic acid ketoreductase aflD, which catalyzes the dehydration of norsolorinic acid to form (1'S)-averantin. The norsolorinic acid reductases aflE and aflF may also play a role in the conversion of NOR to AVN. The cytochrome P450 monooxygenase aflG then catalyzes the hydroxylation of AVN to 5'hydroxyaverantin (HAVN). The next step is performed by the 5'-hydroxyaverantin dehydrogenase aflH that transforms HAVN to 5'-oxoaverantin (OAVN) which is further converted to averufin (AVF) by aflK that plays a dual role in the pathway, as a 5'-oxoaverantin cyclase that mediates conversion of 5'-oxoaverantin, as well as a versicolorin B synthase in a later step in the pathway. The averufin oxidase aflI catalyzes the conversion of AVF to versiconal hemiacetal acetate (VHA). VHA is then the substrate for the versiconal hemiacetal acetate esterase aflJ to yield versiconal (VAL). Versicolorin B synthase aflK then converts VAL to versicolorin B (VERB) by closing the bisfuran ring of aflatoxin which is required for DNA-binding, thus giving to aflatoxin its activity as a mutagen. Then, the activity of the versicolorin B desaturase aflL leads to versicolorin A (VERA). A branch point starts from VERB since it can also be converted to dihydrodemethylsterigmatocystin (DMDHST), probably also by aflL, VERA being a precursor for aflatoxins B1 and G1, and DMDHST for aflatoxins B2 and G2. Next, the versicolorin reductase aflM and the cytochrome P450 monooxygenase aflN are involved in conversion of VERA to demethylsterigmatocystin (DMST). AflX and aflY seem also involved in this step, through probable aflX-mediated epoxide ring-opening step following versicolorin A oxidation and aflY-mediated Baeyer-Villiger oxidation required for the formation of the xanthone ring. The methyltransferase aflO then leads to the modification of DMST to sterigmatocystin (ST), and of DMDHST to dihydrosterigmatocystin (DHST). Both ST and DHST are then substrates of the O-methyltransferase aflP to yield O-methylsterigmatocystin (OMST) and dihydro-O-methylsterigmatocystin (DHOMST), respectively. Finally OMST is converted to aflatoxins B1 and G1, and DHOMST to aflatoxins B2 and G2, via the action of several enzymes including O-methylsterigmatocystin oxidoreductase aflQ, the cytochrome P450 monooxygenase aflU, but also the NADH-dependent flavin oxidoreductase nadA which is specifically required for the synthesis of AFG1. In Aspergillus parasiticus (strain ATCC 56775 / NRRL 5862 / SRRC 143 / SU-1), this protein is Oxidoreductase AflY.